Here is a 397-residue protein sequence, read N- to C-terminus: Chorismate synthase (397 aa).

NADP(+) is bound by residues arginine 40 and arginine 46. Residues arginine 129 to serine 131, glutamine 257 to alanine 258, glycine 302, lysine 317 to serine 321, and arginine 343 each bind FMN.

Belongs to the chorismate synthase family. In terms of assembly, homotetramer. FMNH2 is required as a cofactor.

The enzyme catalyses 5-O-(1-carboxyvinyl)-3-phosphoshikimate = chorismate + phosphate. Its pathway is metabolic intermediate biosynthesis; chorismate biosynthesis; chorismate from D-erythrose 4-phosphate and phosphoenolpyruvate: step 7/7. Catalyzes the anti-1,4-elimination of the C-3 phosphate and the C-6 proR hydrogen from 5-enolpyruvylshikimate-3-phosphate (EPSP) to yield chorismate, which is the branch point compound that serves as the starting substrate for the three terminal pathways of aromatic amino acid biosynthesis. This reaction introduces a second double bond into the aromatic ring system. This chain is Chorismate synthase, found in Chlorobium phaeobacteroides (strain DSM 266 / SMG 266 / 2430).